Here is a 242-residue protein sequence, read N- to C-terminus: Probable transcriptional regulatory protein lhv_0777 (242 aa).

The tract at residues 1–22 is disordered; the sequence is MSGHSKWHNIQGRKNAQDAKRG.

This sequence belongs to the TACO1 family.

The protein localises to the cytoplasm. This Lactobacillus helveticus (strain DPC 4571) protein is Probable transcriptional regulatory protein lhv_0777.